A 203-amino-acid chain; its full sequence is N-(5'-phosphoribosyl)anthranilate isomerase (203 aa).

This sequence belongs to the TrpF family.

It carries out the reaction N-(5-phospho-beta-D-ribosyl)anthranilate = 1-(2-carboxyphenylamino)-1-deoxy-D-ribulose 5-phosphate. It participates in amino-acid biosynthesis; L-tryptophan biosynthesis; L-tryptophan from chorismate: step 3/5. This is N-(5'-phosphoribosyl)anthranilate isomerase from Geotalea uraniireducens (strain Rf4) (Geobacter uraniireducens).